The sequence spans 167 residues: Plastocyanin major isoform, chloroplastic (167 aa).

The transit peptide at 1–52 directs the protein to the chloroplast; the sequence is MASVTSATVAIPSFTGLKASTIKSSATVRIQTAAVASPKLTVKSSLKNFGVA. A thylakoid-targeting transit peptide spans 53 to 68; that stretch reads AVAAAASIALAGNAMA. Residues 69–167 enclose the Plastocyanin-like domain; that stretch reads IEVLLGGGDG…AGMVGKVTVN (99 aa). 4 residues coordinate Cu cation: His-105, Cys-152, His-155, and Met-160.

This sequence belongs to the plastocyanin family. Requires Cu(2+) as cofactor.

It is found in the plastid. The protein localises to the chloroplast thylakoid membrane. Functionally, participates in electron transfer between P700 and the cytochrome b6-f complex in photosystem I. Seems to be the major plastocyanin in Arabidopsis. The polypeptide is Plastocyanin major isoform, chloroplastic (DRT112) (Arabidopsis thaliana (Mouse-ear cress)).